The following is a 1649-amino-acid chain: eIF-2-alpha kinase GCN2 (1649 aa).

The disordered stretch occupies residues 1–26; the sequence is MAGGRGAAGRGPAEPQESYSQRQDHE. One can recognise an RWD domain in the interval 25–137; sequence HELQALEAIY…HHVQSFLSEH (113 aa). Residues 146–205 adopt a coiled-coil conformation; that stretch reads HEEMLERQAQEKQQRLLEARQKEEQEQREILHEIQKRKEEIKEEKKRKEMAKQERLEITS. The disordered stretch occupies residues 227-260; it reads HGGSPDFVGNGKARAHSSGRSRRERQYSVCSGEA. At serine 230 the chain carries Phosphoserine. The segment covering 239 to 249 has biased composition (basic residues); that stretch reads ARAHSSGRSRR. 2 Protein kinase domains span residues 296–539 and 590–1001; these read VYNA…HSFI and FEEL…SELL. ATP-binding positions include 596 to 604 and lysine 619; that span reads LGKGAFGAV. A disordered region spans residues 662–785; that stretch reads PAVPGTPPPD…CNEKDSRHEI (124 aa). Position 667 is a phosphothreonine (threonine 667). The span at 705–721 shows a compositional bias: polar residues; the sequence is LSSSVEWSTSAERSNSA. Composition is skewed to acidic residues over residues 731–740 and 754–764; these read SSDEEDEDER and SDSDIIFDNED. Catalysis depends on aspartate 847, which acts as the Proton acceptor. At threonine 870 the chain carries Phosphothreonine. Phosphothreonine; by autocatalysis occurs at positions 899 and 904. The histidyl-tRNA synthetase-like stretch occupies residues 1022 to 1493; it reads TDGKAYRTMM…DHVMQKLRTK (472 aa). At lysine 1259 the chain carries N6-acetyllysine.

It belongs to the protein kinase superfamily. Ser/Thr protein kinase family. GCN2 subfamily. As to quaternary structure, homodimer; homodimerization is important for kinase activation by uncharged tRNAs. Interacts with GCN1; this interaction stimulates EIF2AK4/GCN2 kinase activity and is impaired by IMPACT upon a variety of stress conditions, such as amino acid depletion, UV-C irradiation, proteasome inhibitor treatment and glucose deprivation. Interacts with DNAJC3; this interaction inhibits EIF2AK4/GCN2 kinase activity during endoplasmic reticulum (ER), hypothermic and amino acid-starving stress conditions. Interacts with MAP3K20; activates EIF2AK4/GCN2 kinase activity in response to moderate ribotoxic stress. Autophosphorylated; autophosphorylation on Thr-899 is increased upon amino acid starvation and in UV irradiation cells and inhibited in presence of IMPACT.

It localises to the cytoplasm. It catalyses the reaction L-seryl-[protein] + ATP = O-phospho-L-seryl-[protein] + ADP + H(+). The enzyme catalyses L-threonyl-[protein] + ATP = O-phospho-L-threonyl-[protein] + ADP + H(+). Its function is as follows. Metabolic-stress sensing protein kinase that phosphorylates the alpha subunit of eukaryotic translation initiation factor 2 (EIF2S1/eIF-2-alpha) in response to low amino acid availability. Plays a role as an activator of the integrated stress response (ISR) required for adaptation to amino acid starvation. EIF2S1/eIF-2-alpha phosphorylation in response to stress converts EIF2S1/eIF-2-alpha into a global protein synthesis inhibitor, leading to a global attenuation of cap-dependent translation, and thus to a reduced overall utilization of amino acids, while concomitantly initiating the preferential translation of ISR-specific mRNAs, such as the transcriptional activator ATF4, and hence allowing ATF4-mediated reprogramming of amino acid biosynthetic gene expression to alleviate nutrient depletion. Required for the translational induction of protein kinase PRKCH following amino acid starvation. Binds uncharged tRNAs. Involved in cell cycle arrest by promoting cyclin D1 mRNA translation repression after the unfolded protein response pathway (UPR) activation or cell cycle inhibitor CDKN1A/p21 mRNA translation activation in response to amino acid deprivation. Plays a role in the consolidation of synaptic plasticity, learning as well as formation of long-term memory. Plays a role in neurite outgrowth inhibition. Plays a role in feeding behavior to maintain amino acid homeostasis; contributes to the innate aversion toward diets of imbalanced amino acid composition. Plays a proapoptotic role in response to glucose deprivation. Promotes global cellular protein synthesis repression in response to UV irradiation independently of the stress-activated protein kinase/c-Jun N-terminal kinase (SAPK/JNK) and p38 MAPK signaling pathways. Plays a role in the antiviral response against alphavirus infection; impairs early viral mRNA translation of the incoming genomic virus RNA, thus preventing alphavirus replication. The chain is eIF-2-alpha kinase GCN2 from Rattus norvegicus (Rat).